Consider the following 248-residue polypeptide: Ribonuclease PH (248 aa).

Phosphate contacts are provided by residues arginine 86 and glycine 124–arginine 126.

This sequence belongs to the RNase PH family. As to quaternary structure, homohexameric ring arranged as a trimer of dimers.

It catalyses the reaction tRNA(n+1) + phosphate = tRNA(n) + a ribonucleoside 5'-diphosphate. Phosphorolytic 3'-5' exoribonuclease that plays an important role in tRNA 3'-end maturation. Removes nucleotide residues following the 3'-CCA terminus of tRNAs; can also add nucleotides to the ends of RNA molecules by using nucleoside diphosphates as substrates, but this may not be physiologically important. Probably plays a role in initiation of 16S rRNA degradation (leading to ribosome degradation) during starvation. The polypeptide is Ribonuclease PH (Listeria monocytogenes serotype 4b (strain CLIP80459)).